A 915-amino-acid polypeptide reads, in one-letter code: Protein translocase subunit SecA (915 aa).

ATP contacts are provided by residues glutamine 87, 105-109 (GEGKT), and aspartate 516. Residues 866–915 (MTYGAPSDGDIGGSVEDEPLELPEGARVGRNDPCPCGSGKKYKQCHGKLS) form a disordered region. Residues cysteine 899, cysteine 901, cysteine 910, and histidine 911 each coordinate Zn(2+). Over residues 905-915 (KKYKQCHGKLS) the composition is skewed to basic residues.

It belongs to the SecA family. In terms of assembly, monomer and homodimer. Part of the essential Sec protein translocation apparatus which comprises SecA, SecYEG and auxiliary proteins SecDF-YajC and YidC. Requires Zn(2+) as cofactor.

It is found in the cell inner membrane. It localises to the cytoplasm. The enzyme catalyses ATP + H2O + cellular proteinSide 1 = ADP + phosphate + cellular proteinSide 2.. In terms of biological role, part of the Sec protein translocase complex. Interacts with the SecYEG preprotein conducting channel. Has a central role in coupling the hydrolysis of ATP to the transfer of proteins into and across the cell membrane, serving both as a receptor for the preprotein-SecB complex and as an ATP-driven molecular motor driving the stepwise translocation of polypeptide chains across the membrane. In Delftia acidovorans (strain DSM 14801 / SPH-1), this protein is Protein translocase subunit SecA.